Here is a 309-residue protein sequence, read N- to C-terminus: Probable 5-dehydro-4-deoxyglucarate dehydratase (309 aa).

It belongs to the DapA family.

It catalyses the reaction 5-dehydro-4-deoxy-D-glucarate + H(+) = 2,5-dioxopentanoate + CO2 + H2O. Its pathway is carbohydrate acid metabolism; D-glucarate degradation; 2,5-dioxopentanoate from D-glucarate: step 2/2. The sequence is that of Probable 5-dehydro-4-deoxyglucarate dehydratase from Saccharopolyspora erythraea (strain ATCC 11635 / DSM 40517 / JCM 4748 / NBRC 13426 / NCIMB 8594 / NRRL 2338).